A 320-amino-acid chain; its full sequence is HPr kinase/phosphorylase (320 aa).

Active-site residues include His139 and Lys160. 154–161 (GDSGVGKS) provides a ligand contact to ATP. Ser161 provides a ligand contact to Mg(2+). Residue Asp178 is the Proton acceptor; for phosphorylation activity. Proton donor; for dephosphorylation activity of the active site. The tract at residues 202–211 (MEIRGIGIID) is important for the catalytic mechanism of both phosphorylation and dephosphorylation. Residue Glu203 participates in Mg(2+) binding. Residue Arg244 is part of the active site. The tract at residues 265 to 270 (PVKTGR) is important for the catalytic mechanism of dephosphorylation.

The protein belongs to the HPrK/P family. As to quaternary structure, homohexamer. Mg(2+) is required as a cofactor.

It catalyses the reaction [HPr protein]-L-serine + ATP = [HPr protein]-O-phospho-L-serine + ADP + H(+). The enzyme catalyses [HPr protein]-O-phospho-L-serine + phosphate + H(+) = [HPr protein]-L-serine + diphosphate. Catalyzes the ATP- as well as the pyrophosphate-dependent phosphorylation of a specific serine residue in HPr, a phosphocarrier protein of the phosphoenolpyruvate-dependent sugar phosphotransferase system (PTS). HprK/P also catalyzes the pyrophosphate-producing, inorganic phosphate-dependent dephosphorylation (phosphorolysis) of seryl-phosphorylated HPr (P-Ser-HPr). The two antagonistic activities of HprK/P are regulated by several intracellular metabolites, which change their concentration in response to the absence or presence of rapidly metabolisable carbon sources (glucose, fructose, etc.) in the growth medium. Therefore, by controlling the phosphorylation state of HPr, HPrK/P is a sensor enzyme that plays a major role in the regulation of carbon metabolism and sugar transport: it mediates carbon catabolite repression (CCR), and regulates PTS-catalyzed carbohydrate uptake and inducer exclusion. In Limosilactobacillus reuteri (strain DSM 20016) (Lactobacillus reuteri), this protein is HPr kinase/phosphorylase.